The sequence spans 231 residues: 5'-methylthioadenosine/S-adenosylhomocysteine nucleosidase (231 aa).

The Proton acceptor role is filled by E12. Substrate contacts are provided by residues G78, I153, and 174-175 (ME). D198 serves as the catalytic Proton donor.

This sequence belongs to the PNP/UDP phosphorylase family. MtnN subfamily.

It carries out the reaction S-adenosyl-L-homocysteine + H2O = S-(5-deoxy-D-ribos-5-yl)-L-homocysteine + adenine. It catalyses the reaction S-methyl-5'-thioadenosine + H2O = 5-(methylsulfanyl)-D-ribose + adenine. The catalysed reaction is 5'-deoxyadenosine + H2O = 5-deoxy-D-ribose + adenine. It participates in amino-acid biosynthesis; L-methionine biosynthesis via salvage pathway; S-methyl-5-thio-alpha-D-ribose 1-phosphate from S-methyl-5'-thioadenosine (hydrolase route): step 1/2. In terms of biological role, catalyzes the irreversible cleavage of the glycosidic bond in both 5'-methylthioadenosine (MTA) and S-adenosylhomocysteine (SAH/AdoHcy) to adenine and the corresponding thioribose, 5'-methylthioribose and S-ribosylhomocysteine, respectively. Also cleaves 5'-deoxyadenosine, a toxic by-product of radical S-adenosylmethionine (SAM) enzymes, into 5-deoxyribose and adenine. In Maridesulfovibrio salexigens (strain ATCC 14822 / DSM 2638 / NCIMB 8403 / VKM B-1763) (Desulfovibrio salexigens), this protein is 5'-methylthioadenosine/S-adenosylhomocysteine nucleosidase.